Reading from the N-terminus, the 505-residue chain is MPHLGPLRRRAWAALLGQLLRPPSTVCTRGCHSQVAKAVLTSEQLKSHQEKPNFVIKVPKGTRDLSPQQMVVREKILDKIISCFKRHGAKGLDTPAFELKEMLTEKYEDNFGLMYDLKDQGGELLSLRYDLTVPFARYLAMNKLKKMKRYQVGKVWRRESPAIAQGRYREFCQCDFDIAGEFDPMIPDAECLRIMCEILSGLQLGDFLIKVNDRRVVDGIFAVCGVPESKLRTICSSMDKLDKMSWEGVRHEMVAKKGLAPEVADRIGDFVQYHGGISLVEDLFKDPRLSQSQLALQGLGDLKLLFEYLRLFGIADKISLDLSLARGLDYYTGVIYEAVLLESPAQAGKETLSVGSVAAGGRYDNLVAQFDPKGHHVPCVGLSIGVERIFYLVEQKMKMSGEKVRTTETQVFVATPQKNFLQERLKIIAELWDAGIKAEMLYKNNPKLLTQLHYCEKADIPLMVIIGEQERNEGVIKLRSVASREEVTINRESLVAEIQKRLSES.

A mitochondrion-targeting transit peptide spans 1 to 31 (MPHLGPLRRRAWAALLGQLLRPPSTVCTRGC). Phosphoserine is present on S66. Residues 130–132 (DLT), R157, Q173, D177, R326, and 330–331 (YY) contribute to the L-histidine site. The residue at position 443 (K443) is an N6-acetyllysine.

This sequence belongs to the class-II aminoacyl-tRNA synthetase family. In terms of assembly, homodimer.

Its subcellular location is the mitochondrion. The catalysed reaction is tRNA(His) + L-histidine + ATP = L-histidyl-tRNA(His) + AMP + diphosphate + H(+). In terms of biological role, mitochondrial aminoacyl-tRNA synthetase that catalyzes the ATP-dependent ligation of histidine to the 3'-end of its cognate tRNA, via the formation of an aminoacyl-adenylate intermediate (His-AMP). This is Histidine--tRNA ligase, mitochondrial (Hars2) from Mus musculus (Mouse).